The chain runs to 346 residues: Holliday junction branch migration complex subunit RuvB (346 aa).

Residues 1–182 (MSEAARLIAP…FGIPVRLNFY (182 aa)) are large ATPase domain (RuvB-L). Residues L21, R22, G63, K66, T67, T68, 129–131 (EDF), R172, Y182, and R219 each bind ATP. Position 67 (T67) interacts with Mg(2+). The segment at 183 to 253 (TVEELELIVR…IADEALTRLL (71 aa)) is small ATPAse domain (RuvB-S). Positions 256-346 (SMGLDQLDRR…SQFRLTLEDD (91 aa)) are head domain (RuvB-H). Residues R292, R311, and R316 each coordinate DNA.

This sequence belongs to the RuvB family. As to quaternary structure, homohexamer. Forms an RuvA(8)-RuvB(12)-Holliday junction (HJ) complex. HJ DNA is sandwiched between 2 RuvA tetramers; dsDNA enters through RuvA and exits via RuvB. An RuvB hexamer assembles on each DNA strand where it exits the tetramer. Each RuvB hexamer is contacted by two RuvA subunits (via domain III) on 2 adjacent RuvB subunits; this complex drives branch migration. In the full resolvosome a probable DNA-RuvA(4)-RuvB(12)-RuvC(2) complex forms which resolves the HJ.

Its subcellular location is the cytoplasm. It carries out the reaction ATP + H2O = ADP + phosphate + H(+). Functionally, the RuvA-RuvB-RuvC complex processes Holliday junction (HJ) DNA during genetic recombination and DNA repair, while the RuvA-RuvB complex plays an important role in the rescue of blocked DNA replication forks via replication fork reversal (RFR). RuvA specifically binds to HJ cruciform DNA, conferring on it an open structure. The RuvB hexamer acts as an ATP-dependent pump, pulling dsDNA into and through the RuvAB complex. RuvB forms 2 homohexamers on either side of HJ DNA bound by 1 or 2 RuvA tetramers; 4 subunits per hexamer contact DNA at a time. Coordinated motions by a converter formed by DNA-disengaged RuvB subunits stimulates ATP hydrolysis and nucleotide exchange. Immobilization of the converter enables RuvB to convert the ATP-contained energy into a lever motion, pulling 2 nucleotides of DNA out of the RuvA tetramer per ATP hydrolyzed, thus driving DNA branch migration. The RuvB motors rotate together with the DNA substrate, which together with the progressing nucleotide cycle form the mechanistic basis for DNA recombination by continuous HJ branch migration. Branch migration allows RuvC to scan DNA until it finds its consensus sequence, where it cleaves and resolves cruciform DNA. The sequence is that of Holliday junction branch migration complex subunit RuvB from Sinorhizobium medicae (strain WSM419) (Ensifer medicae).